The following is a 106-amino-acid chain: Large ribosomal subunit protein uL24 (106 aa).

Positions 1–20 (MNKRAKSKNREPLRKSPVKR) are disordered. Residues 8-20 (KNREPLRKSPVKR) are compositionally biased toward basic and acidic residues.

Belongs to the universal ribosomal protein uL24 family. In terms of assembly, part of the 50S ribosomal subunit.

Functionally, one of two assembly initiator proteins, it binds directly to the 5'-end of the 23S rRNA, where it nucleates assembly of the 50S subunit. One of the proteins that surrounds the polypeptide exit tunnel on the outside of the subunit. This chain is Large ribosomal subunit protein uL24, found in Methylacidiphilum infernorum (isolate V4) (Methylokorus infernorum (strain V4)).